Here is a 360-residue protein sequence, read N- to C-terminus: Photosystem II protein D1 (360 aa).

3 helical membrane passes run 30–47 (YVGW…AATT), 119–134 (HFLI…QWEL), and 143–157 (WICV…AAFA). H119 contributes to the chlorophyll a binding site. Y127 serves as a coordination point for pheophytin a. 2 residues coordinate [CaMn4O5] cluster: D171 and E190. The helical transmembrane segment at 198–219 (FHMAGVAGMFGGALFSAMHGSL) threads the bilayer. H199 contributes to the chlorophyll a binding site. Residues H216 and 265 to 266 (SF) each bind a quinone. H216 provides a ligand contact to Fe cation. Residue H273 participates in Fe cation binding. Residues 275–289 (FLASWPVICVWLTSM) form a helical membrane-spanning segment. [CaMn4O5] cluster contacts are provided by H333, E334, D343, and A345. Residues 346–360 (AAESTSVALVAPAIG) constitute a propeptide that is removed on maturation.

It belongs to the reaction center PufL/M/PsbA/D family. As to quaternary structure, PSII is composed of 1 copy each of membrane proteins PsbA, PsbB, PsbC, PsbD, PsbE, PsbF, PsbH, PsbI, PsbJ, PsbK, PsbL, PsbM, PsbT, PsbX, PsbY, Psb30/Ycf12, peripheral proteins PsbO, CyanoQ (PsbQ), PsbU, PsbV and a large number of cofactors. It forms dimeric complexes. The cofactor is The D1/D2 heterodimer binds P680, chlorophylls that are the primary electron donor of PSII, and subsequent electron acceptors. It shares a non-heme iron and each subunit binds pheophytin, quinone, additional chlorophylls, carotenoids and lipids. D1 provides most of the ligands for the Mn4-Ca-O5 cluster of the oxygen-evolving complex (OEC). There is also a Cl(-1) ion associated with D1 and D2, which is required for oxygen evolution. The PSII complex binds additional chlorophylls, carotenoids and specific lipids.. Post-translationally, tyr-162 forms a radical intermediate that is referred to as redox-active TyrZ, YZ or Y-Z. In terms of processing, C-terminally processed by CtpA; processing is essential to allow assembly of the oxygen-evolving complex and thus photosynthetic growth.

The protein localises to the cellular thylakoid membrane. The enzyme catalyses 2 a plastoquinone + 4 hnu + 2 H2O = 2 a plastoquinol + O2. Photosystem II (PSII) is a light-driven water:plastoquinone oxidoreductase that uses light energy to abstract electrons from H(2)O, generating O(2) and a proton gradient subsequently used for ATP formation. It consists of a core antenna complex that captures photons, and an electron transfer chain that converts photonic excitation into a charge separation. The D1/D2 (PsbA/PsbD) reaction center heterodimer binds P680, the primary electron donor of PSII as well as several subsequent electron acceptors. The chain is Photosystem II protein D1 from Prochlorococcus marinus (strain NATL1A).